The primary structure comprises 148 residues: Snaclec 4 (148 aa).

The N-terminal stretch at 1–23 (MGRFIFVSFSLLVVFFSLSGTEA) is a signal peptide. A C-type lectin domain is found at 34 to 148 (YDQNCYKAFE…DTQFRLQEPG (115 aa)).

The protein belongs to the snaclec family. Heterodimer; disulfide-linked. Contains disulfide bonds. Expressed by the venom gland.

It localises to the secreted. In terms of biological role, interferes with one step of hemostasis (modulation of platelet aggregation, or coagulation cascade, for example). This is Snaclec 4 from Echis pyramidum leakeyi (Leakey's carpet viper).